A 364-amino-acid chain; its full sequence is UDP-N-acetylglucosamine--N-acetylmuramyl-(pentapeptide) pyrophosphoryl-undecaprenol N-acetylglucosamine transferase (364 aa).

Residues 10-12, Asn124, Arg165, Ser193, Ile248, and Gln293 each bind UDP-N-acetyl-alpha-D-glucosamine; that span reads TGG.

The protein belongs to the glycosyltransferase 28 family. MurG subfamily.

Its subcellular location is the cell inner membrane. The catalysed reaction is di-trans,octa-cis-undecaprenyl diphospho-N-acetyl-alpha-D-muramoyl-L-alanyl-D-glutamyl-meso-2,6-diaminopimeloyl-D-alanyl-D-alanine + UDP-N-acetyl-alpha-D-glucosamine = di-trans,octa-cis-undecaprenyl diphospho-[N-acetyl-alpha-D-glucosaminyl-(1-&gt;4)]-N-acetyl-alpha-D-muramoyl-L-alanyl-D-glutamyl-meso-2,6-diaminopimeloyl-D-alanyl-D-alanine + UDP + H(+). Its pathway is cell wall biogenesis; peptidoglycan biosynthesis. Cell wall formation. Catalyzes the transfer of a GlcNAc subunit on undecaprenyl-pyrophosphoryl-MurNAc-pentapeptide (lipid intermediate I) to form undecaprenyl-pyrophosphoryl-MurNAc-(pentapeptide)GlcNAc (lipid intermediate II). In Geobacter metallireducens (strain ATCC 53774 / DSM 7210 / GS-15), this protein is UDP-N-acetylglucosamine--N-acetylmuramyl-(pentapeptide) pyrophosphoryl-undecaprenol N-acetylglucosamine transferase.